Consider the following 365-residue polypeptide: 4-hydroxy-tetrahydrodipicolinate synthase 1, chloroplastic (365 aa).

The transit peptide at 1–39 directs the protein to the chloroplast; the sequence is MSALKNYGLISIDSALHFPRSNQLQSYKRRNAKWVSPIA. T108 contributes to the pyruvate binding site. Y194 acts as the Proton donor/acceptor in catalysis. The Schiff-base intermediate with substrate role is filled by K222. I261 is a pyruvate binding site.

It belongs to the DapA family.

The protein resides in the plastid. Its subcellular location is the chloroplast. The catalysed reaction is L-aspartate 4-semialdehyde + pyruvate = (2S,4S)-4-hydroxy-2,3,4,5-tetrahydrodipicolinate + H2O + H(+). The protein operates within amino-acid biosynthesis; L-lysine biosynthesis via DAP pathway; (S)-tetrahydrodipicolinate from L-aspartate: step 3/4. Functionally, catalyzes the condensation of (S)-aspartate-beta-semialdehyde [(S)-ASA] and pyruvate to 4-hydroxy-tetrahydrodipicolinate (HTPA). This Arabidopsis thaliana (Mouse-ear cress) protein is 4-hydroxy-tetrahydrodipicolinate synthase 1, chloroplastic (DHDPS1).